Here is a 405-residue protein sequence, read N- to C-terminus: Phosphoglycerate kinase (405 aa).

Substrate-binding positions include 21 to 23, arginine 36, 59 to 62, arginine 119, and arginine 161; these read DFN and HLGR. ATP contacts are provided by residues lysine 212, glycine 301, glutamate 332, and 361–364; that span reads GGDS.

It belongs to the phosphoglycerate kinase family. As to quaternary structure, monomer.

The protein localises to the cytoplasm. It catalyses the reaction (2R)-3-phosphoglycerate + ATP = (2R)-3-phospho-glyceroyl phosphate + ADP. It functions in the pathway carbohydrate degradation; glycolysis; pyruvate from D-glyceraldehyde 3-phosphate: step 2/5. The polypeptide is Phosphoglycerate kinase (Leuconostoc mesenteroides subsp. mesenteroides (strain ATCC 8293 / DSM 20343 / BCRC 11652 / CCM 1803 / JCM 6124 / NCDO 523 / NBRC 100496 / NCIMB 8023 / NCTC 12954 / NRRL B-1118 / 37Y)).